The chain runs to 276 residues: Pantothenate synthetase (276 aa).

Position 27-34 (27-34 (MGALHRGH)) interacts with ATP. The active-site Proton donor is the histidine 34. Glutamine 58 contacts (R)-pantoate. Glutamine 58 provides a ligand contact to beta-alanine. Residue 147–150 (GKKD) coordinates ATP. Glutamine 153 is a binding site for (R)-pantoate. Residues alanine 176 and 184-187 (LSSR) each bind ATP.

The protein belongs to the pantothenate synthetase family. In terms of assembly, homodimer.

It localises to the cytoplasm. It catalyses the reaction (R)-pantoate + beta-alanine + ATP = (R)-pantothenate + AMP + diphosphate + H(+). Its pathway is cofactor biosynthesis; (R)-pantothenate biosynthesis; (R)-pantothenate from (R)-pantoate and beta-alanine: step 1/1. Catalyzes the condensation of pantoate with beta-alanine in an ATP-dependent reaction via a pantoyl-adenylate intermediate. This Helicobacter pylori (strain P12) protein is Pantothenate synthetase.